The following is a 392-amino-acid chain: Rhizopuspepsin-5 (392 aa).

The first 21 residues, 1 to 21, serve as a signal peptide directing secretion; the sequence is MKFSLISSCVALAVLVLSTEA. Positions 22–69 are cleaved as a propeptide — activation peptide; it reads APNGKKVNIPLTKNKDYKPNAKNAIQKVLAKYHRHRSTSSSSNSTSTD. The region spanning 85-389 is the Peptidase A1 domain; sequence YFGQVKVGTP…NPTVPQVQIA (305 aa). Residue Asp-103 is part of the active site. Cys-116 and Cys-119 are oxidised to a cystine. Asp-286 is a catalytic residue. An intrachain disulfide couples Cys-320 to Cys-353.

The protein belongs to the peptidase A1 family.

The enzyme catalyses Hydrolysis of proteins with broad specificity similar to that of pepsin A, preferring hydrophobic residues at P1 and P1'. Clots milk and activates trypsinogen. Does not cleave 4-Gln-|-His-5, but does cleave 10-His-|-Leu-11 and 12-Val-|-Glu-13 in B chain of insulin.. The chain is Rhizopuspepsin-5 from Rhizopus niveus.